Consider the following 200-residue polypeptide: Phospholipase A2 inhibitor gamma subunit B (200 aa).

The N-terminal stretch at 1–19 is a signal peptide; sequence MKFLLFCCLFGTFLATGMC. 8 disulfide bridges follow: Cys-22-Cys-46, Cys-25-Cys-32, Cys-39-Cys-67, Cys-73-Cys-94, Cys-95-Cys-100, Cys-120-Cys-145, Cys-138-Cys-165, and Cys-171-Cys-191. N-linked (GlcNAc...) asparagine glycosylation occurs at Asn-31.

The protein belongs to the CNF-like-inhibitor family. Heterodimer of subunit A and subunit B. Post-translationally, N-glycosylated. Expressed by the liver. Not expressed in esophagus, stomach, pancreas, spleen, gall bladder, small intestine, rectum, kidney, trachea, lung, testis and body fat.

Its subcellular location is the secreted. Its function is as follows. Inhibits the enzymatic activity of phospholipase A2 (PA2). This Elaphe quadrivirgata (Japanese four-lined ratsnake) protein is Phospholipase A2 inhibitor gamma subunit B.